Reading from the N-terminus, the 200-residue chain is Large ribosomal subunit protein uL4 (200 aa).

The interval 38–68 (GRQGSKQQKTRSDVRGGGKRPWRQKGTGRAR) is disordered. Residues 54–65 (GGKRPWRQKGTG) are compositionally biased toward basic residues.

It belongs to the universal ribosomal protein uL4 family. In terms of assembly, part of the 50S ribosomal subunit.

Its function is as follows. One of the primary rRNA binding proteins, this protein initially binds near the 5'-end of the 23S rRNA. It is important during the early stages of 50S assembly. It makes multiple contacts with different domains of the 23S rRNA in the assembled 50S subunit and ribosome. Functionally, forms part of the polypeptide exit tunnel. The chain is Large ribosomal subunit protein uL4 from Pseudomonas fluorescens (strain SBW25).